The following is a 298-amino-acid chain: N-acetylmuramic acid 6-phosphate etherase (298 aa).

In terms of domain architecture, SIS spans 55–218 (IHAQVSGGGR…STGLMIKSGK (164 aa)). The Proton donor role is filled by glutamate 83. Glutamate 114 is a catalytic residue.

This sequence belongs to the GCKR-like family. MurNAc-6-P etherase subfamily. As to quaternary structure, homodimer.

It catalyses the reaction N-acetyl-D-muramate 6-phosphate + H2O = N-acetyl-D-glucosamine 6-phosphate + (R)-lactate. It participates in amino-sugar metabolism; 1,6-anhydro-N-acetylmuramate degradation. The protein operates within amino-sugar metabolism; N-acetylmuramate degradation. Its pathway is cell wall biogenesis; peptidoglycan recycling. Functionally, specifically catalyzes the cleavage of the D-lactyl ether substituent of MurNAc 6-phosphate, producing GlcNAc 6-phosphate and D-lactate. Together with AnmK, is also required for the utilization of anhydro-N-acetylmuramic acid (anhMurNAc) either imported from the medium or derived from its own cell wall murein, and thus plays a role in cell wall recycling. This chain is N-acetylmuramic acid 6-phosphate etherase, found in Escherichia fergusonii (strain ATCC 35469 / DSM 13698 / CCUG 18766 / IAM 14443 / JCM 21226 / LMG 7866 / NBRC 102419 / NCTC 12128 / CDC 0568-73).